Reading from the N-terminus, the 570-residue chain is nebramycin 5' synthase (570 aa).

The kae1-like stretch occupies residues 1–354; that stretch reads MRVLGLNGWP…AAAAVAVELG (354 aa). Residue aspartate 12 coordinates tobramycin. The active-site Proton acceptor is histidine 14. Lysine 39 contributes to the ATP binding site. Residues histidine 114, histidine 118, and aspartate 137 each coordinate Fe cation. Positions 139, 168, and 172 each coordinate carbamoyl adenylate. Tobramycin contacts are provided by glutamate 172 and aspartate 228. Residues glycine 310 and asparagine 314 each coordinate carbamoyl adenylate. Aspartate 338 serves as a coordination point for Fe cation. A yrdC-like region spans residues 367–570; sequence GPEFSPDQVR…PYLVTKDLRH (204 aa). 2 residues coordinate ATP: arginine 418 and arginine 449. 418-419 serves as a coordination point for carbamoyl phosphate; that stretch reads RA. Carbamoyl phosphate contacts are provided by residues arginine 498 and 528–530; that span reads NTS.

Belongs to the NodU/CmcH family. Requires Fe(2+) as cofactor.

The catalysed reaction is tobramycin + carbamoyl phosphate + ATP + H2O = nebramycin 5' + AMP + phosphate + diphosphate + H(+). The enzyme catalyses kanamycin A + carbamoyl phosphate + ATP + H2O = 6''-O-carbamoylkanamycin A + AMP + phosphate + diphosphate + H(+). It carries out the reaction carbamoyl phosphate + ATP + H2O = carbamoyl adenylate + phosphate + diphosphate. It catalyses the reaction tobramycin + carbamoyl adenylate = nebramycin 5' + AMP + H(+). The catalysed reaction is carbamoyl adenylate + kanamycin A = 6''-O-carbamoylkanamycin A + AMP + H(+). It functions in the pathway antibiotic biosynthesis; kanamycin biosynthesis. It participates in antibiotic biosynthesis; tobramycin biosynthesis. Its activity is regulated as follows. ADP inhibits the formation of nebramycin 5'. TobZ is involved in the biosynthesis of the 2-deoxystreptamine-containing aminoglycoside antibiotics such as nebramycin 5 and 6-O-carbamoylkanamycin. Catalyzes the hydrolysis of carbamoyl phosphate and its subsequent adenylation by ATP to yield O-carbamoyladenylate. Then it catalyzes the transfer of the carbamoyl moiety from O-carbamoyladenylate to the tobramycin 6-hydroxy group to yield nebramycin 5'. It catalyzes the same reaction with kanamycin A. These reactions are considerably slower in the presence of deoxy-ATP. This is nebramycin 5' synthase (tobZ) from Streptoalloteichus tenebrarius (strain ATCC 17920 / DSM 40477 / JCM 4838 / CBS 697.72 / NBRC 16177 / NCIMB 11028 / NRRL B-12390 / A12253. 1 / ISP 5477) (Streptomyces tenebrarius).